Here is a 287-residue protein sequence, read N- to C-terminus: Protein-export membrane protein SecF (287 aa).

Helical transmembrane passes span 21–41 (LIAI…FNGL), 129–149 (QIYW…FIIF), 158–178 (VILA…LFGI), 182–202 (LASV…DILL), 226–246 (VTMS…TVFV), and 259–279 (VLII…LGIL).

Belongs to the SecD/SecF family. SecF subfamily. Part of the protein translocation apparatus. Forms a complex with SecD.

Its subcellular location is the cell membrane. In terms of biological role, involved in protein export. The sequence is that of Protein-export membrane protein SecF from Methanothermobacter thermautotrophicus (strain ATCC 29096 / DSM 1053 / JCM 10044 / NBRC 100330 / Delta H) (Methanobacterium thermoautotrophicum).